Reading from the N-terminus, the 424-residue chain is MTEPPAVDRPLRRVAMISLHTSPLDQPGTGDAGGMNVYVVELSRRLADLGIAVDIFTRATSSALPAKVELVPGVTVRNVAAGPYEGLSKNELPAQLCTFARAVLRAEAIREPGYYDVIHSHYWLSGQVGLLARDRWAVPLVHTMHTMAKVKNASLADDDVPEPPARLLGEEQVVEAADRLLANTDEEAHELVTLYGAQPAKVEVVNPGVDLEVFAPGDQAAARRAVGVREDAIVLAFVGRIQPLKAPDLLIRAAARMLERQPELRDRLVVAVIGGPSGNGMEHPEAHAELARRLGVDDVTRFVKPMPRPGLADWYRAASVVCVPSYSESFGLVALEAQACGTPVVAAAVGGLTTAVTDGVTGLLVPGHGVDDFADALAAIATDPGTRETMGKAAVEHAQGFGWELTAQTTLAAYRTATETMAAE.

Histidine 20 contacts 1D-myo-inositol 3-phosphate. Residues 26-27 and glycine 34 each bind UDP-N-acetyl-alpha-D-glucosamine; that span reads QP. Residues 31-36, lysine 89, tyrosine 122, threonine 146, and arginine 166 each bind 1D-myo-inositol 3-phosphate; that span reads DAGGMN. Residues arginine 240, lysine 245, and methionine 306 each contribute to the UDP-N-acetyl-alpha-D-glucosamine site. Mg(2+) contacts are provided by tyrosine 315, arginine 316, and alanine 318. UDP-N-acetyl-alpha-D-glucosamine contacts are provided by glutamate 328 and glutamate 336. Threonine 342 is a Mg(2+) binding site.

This sequence belongs to the glycosyltransferase group 1 family. MshA subfamily. As to quaternary structure, homodimer.

It catalyses the reaction 1D-myo-inositol 3-phosphate + UDP-N-acetyl-alpha-D-glucosamine = 1D-myo-inositol 2-acetamido-2-deoxy-alpha-D-glucopyranoside 3-phosphate + UDP + H(+). In terms of biological role, catalyzes the transfer of a N-acetyl-glucosamine moiety to 1D-myo-inositol 3-phosphate to produce 1D-myo-inositol 2-acetamido-2-deoxy-glucopyranoside 3-phosphate in the mycothiol biosynthesis pathway. The protein is D-inositol 3-phosphate glycosyltransferase of Kribbella flavida (strain DSM 17836 / JCM 10339 / NBRC 14399).